Consider the following 1099-residue polypeptide: Solute carrier family 38 member 10 (1099 aa).

The next 10 membrane-spanning stretches (helical) occupy residues Trp-9–Phe-31, Ile-36–Val-58, Leu-84–Ile-104, Thr-123–Gln-143, Phe-153–Phe-173, Ile-229–Tyr-249, Met-272–Cys-292, Val-323–Glu-343, Ile-345–Ile-365, and Val-378–Ser-398. Disordered stretches follow at residues Asp-440–Gly-679 and Glu-720–Lys-1047. Ser-441 is modified (phosphoserine). Basic and acidic residues-rich tracts occupy residues Ser-441 to Leu-454, Glu-493 to Val-508, Pro-517 to Asp-528, Glu-544 to Glu-561, and Pro-586 to His-599. 2 positions are modified to phosphoserine: Ser-607 and Ser-635. 3 stretches are compositionally biased toward basic and acidic residues: residues Glu-653–Ala-663, Glu-720–Pro-735, and Gly-749–Glu-766. Residues Val-698 to Lys-734 are a coiled coil. Thr-767 is modified (phosphothreonine). Composition is skewed to basic and acidic residues over residues Lys-793 to Lys-802, Glu-852 to Lys-894, Glu-917 to Pro-928, Lys-957 to Gly-969, and Gln-1010 to Lys-1022. Ser-886 is subject to Phosphoserine.

Belongs to the amino acid/polyamine transporter 2 family. In terms of tissue distribution, only expressed in the pituitary, adrenal gland, stomach and in the upper gastrointestinal tract.

The protein localises to the membrane. It carries out the reaction L-glutamate(out) = L-glutamate(in). The enzyme catalyses L-glutamine(out) = L-glutamine(in). The catalysed reaction is L-alanine(in) = L-alanine(out). It catalyses the reaction L-serine(in) = L-serine(out). It carries out the reaction L-leucine(in) = L-leucine(out). Functionally, facilitates bidirectional transport of amino acids. May act as a glutamate sensor that regulates glutamate-glutamine cycle and mTOR signaling in the brain. The transport mechanism remains to be elucidated. This Rattus norvegicus (Rat) protein is Solute carrier family 38 member 10.